The chain runs to 141 residues: Acetyltransferase ECA0875 (141 aa).

The 141-residue stretch at 1-141 (MEIRIFRQDD…GKRLIEDREY (141 aa)) folds into the N-acetyltransferase domain.

The protein belongs to the acetyltransferase family. YpeA subfamily.

The protein is Acetyltransferase ECA0875 of Pectobacterium atrosepticum (strain SCRI 1043 / ATCC BAA-672) (Erwinia carotovora subsp. atroseptica).